The sequence spans 404 residues: Probable tRNA sulfurtransferase (404 aa).

One can recognise a THUMP domain in the interval 61–166 (EAVSERLKDV…SGYSYIMCDE (106 aa)). Residues 184 to 185 (LL), 209 to 210 (HF), R266, G288, and Q297 contribute to the ATP site.

The protein belongs to the ThiI family.

The protein resides in the cytoplasm. The catalysed reaction is [ThiI sulfur-carrier protein]-S-sulfanyl-L-cysteine + a uridine in tRNA + 2 reduced [2Fe-2S]-[ferredoxin] + ATP + H(+) = [ThiI sulfur-carrier protein]-L-cysteine + a 4-thiouridine in tRNA + 2 oxidized [2Fe-2S]-[ferredoxin] + AMP + diphosphate. It carries out the reaction [ThiS sulfur-carrier protein]-C-terminal Gly-Gly-AMP + S-sulfanyl-L-cysteinyl-[cysteine desulfurase] + AH2 = [ThiS sulfur-carrier protein]-C-terminal-Gly-aminoethanethioate + L-cysteinyl-[cysteine desulfurase] + A + AMP + 2 H(+). The protein operates within cofactor biosynthesis; thiamine diphosphate biosynthesis. In terms of biological role, catalyzes the ATP-dependent transfer of a sulfur to tRNA to produce 4-thiouridine in position 8 of tRNAs, which functions as a near-UV photosensor. Also catalyzes the transfer of sulfur to the sulfur carrier protein ThiS, forming ThiS-thiocarboxylate. This is a step in the synthesis of thiazole, in the thiamine biosynthesis pathway. The sulfur is donated as persulfide by IscS. The protein is Probable tRNA sulfurtransferase of Bacillus cereus (strain AH820).